A 211-amino-acid polypeptide reads, in one-letter code: Putative transposase for insertion sequence element IS402 (211 aa).

Residues 51–71 (RRWGRPKTGPNPTDRARPGSK) form a disordered region.

The protein belongs to the transposase 11 family.

In terms of biological role, involved in the transposition of the insertion sequence. The sequence is that of Putative transposase for insertion sequence element IS402 from Burkholderia cepacia (Pseudomonas cepacia).